The following is a 567-amino-acid chain: Galectin-3-binding protein A (567 aa).

The first 16 residues, 1 to 16, serve as a signal peptide directing secretion; it reads MIMYIIWALLFIPVSA. The region spanning 34 to 133 is the SRCR domain; sequence VRLVGGLPSS…HQEDAGVVCD (100 aa). Intrachain disulfides connect C58-C122, C71-C132, and C102-C112. N-linked (GlcNAc...) asparagine glycans are attached at residues N137, N197, N200, and N204. Positions 272–374 constitute a BACK domain; it reads PVSMYEYGLR…IPVDKLYDIQ (103 aa). 3 N-linked (GlcNAc...) asparagine glycosylation sites follow: N412, N432, and N543.

The protein localises to the secreted. It is found in the extracellular space. Its subcellular location is the extracellular matrix. Promotes integrin-mediated cell adhesion. This chain is Galectin-3-binding protein A (lgals3bpa), found in Danio rerio (Zebrafish).